We begin with the raw amino-acid sequence, 344 residues long: Arginine N-succinyltransferase (344 aa).

Leu125 contacts succinyl-CoA. His229 (proton donor) is an active-site residue.

It belongs to the arginine N-succinyltransferase family.

It carries out the reaction succinyl-CoA + L-arginine = N(2)-succinyl-L-arginine + CoA + H(+). The protein operates within amino-acid degradation; L-arginine degradation via AST pathway; L-glutamate and succinate from L-arginine: step 1/5. Catalyzes the transfer of succinyl-CoA to arginine to produce N(2)-succinylarginine. This Salmonella agona (strain SL483) protein is Arginine N-succinyltransferase.